Reading from the N-terminus, the 358-residue chain is DNA replication and repair protein RecF (358 aa).

Residue 30-37 (GANGSGKT) coordinates ATP.

The protein belongs to the RecF family.

The protein localises to the cytoplasm. Its function is as follows. The RecF protein is involved in DNA metabolism; it is required for DNA replication and normal SOS inducibility. RecF binds preferentially to single-stranded, linear DNA. It also seems to bind ATP. In Edwardsiella ictaluri (strain 93-146), this protein is DNA replication and repair protein RecF.